The chain runs to 338 residues: mRNA decay activator protein ZFP36L1 (338 aa).

Positions 1–111 (MTTTLVSATI…QKQPGGGQVN (111 aa)) are necessary and sufficient for the association with mRNA decay enzymes and mRNA decay activation. A Phosphoserine; by MAPKAPK2 modification is found at Ser-54. Ser-90 carries the post-translational modification Phosphoserine; by PKB/AKT1. Ser-92 carries the post-translational modification Phosphoserine; by PKB/AKT1 and MAPKAPK2. Residues 93 to 113 (EGGERLLPTQKQPGGGQVNSS) form a disordered region. 2 C3H1-type zinc fingers span residues 114-142 (RYKT…HGIH) and 152-180 (KYKT…HNAE). The necessary for mRNA decay activation stretch occupies residues 185-338 (LAGARDLSAD…IFSRLSISDD (154 aa)). Position 203 is a phosphoserine; by PKB/AKT1 and MAPKAPK2 (Ser-203). The tract at residues 273 to 338 (SPTTFLFRPM…IFSRLSISDD (66 aa)) is disordered. Over residues 296–318 (QDSLSDQEGYLSSSSSSHSGSDS) the composition is skewed to low complexity. Ser-318 carries the post-translational modification Phosphoserine. Ser-334 carries the phosphoserine; by RPS6KA1 modification.

Associates with the cytoplasmic CCR4-NOT deadenylase and RNA exosome complexes to trigger ARE-containing mRNA deadenylation and decay processes. Interacts with CNOT1. Interacts (via N-terminus) with CNOT6. Interacts with CNOT7; this interaction is inhibited in response to phorbol 12-myristate 13-acetate (PMA) treatment in a p38 MAPK-dependent manner. Interacts with DCP1A. Interacts (via N-terminus) with DCP2. Interacts (via N-terminus) with EXOSC2. Interacts with XRN1. Interacts (via phosphorylated form) with YWHAB; this interaction occurs in a protein kinase AKT1-dependent manner. Interacts (via phosphorylated form) with YWHAZ; this interaction occurs in a p38 MAPK- and AKT-signaling pathways. Phosphorylated. Phosphorylated by RPS6KA1 at Ser-334 upon phorbol 12-myristate 13-acetate (PMA) treatment; this phosphorylation results in dissociation of the CCR4-NOT deadenylase complex and induces p38 MAPK-mediated stabilization of the low-density lipoprotein receptor LDLR mRNA. Phosphorylated by protein kinase AKT1 at Ser-92 and Ser-203 in response to insulin; these phosphorylations stabilize ZFP36L1, increase the association with 14-3-3 proteins and mediate ARE-containing mRNA stabilization. AKT1-mediated phosphorylation at Ser-92 does not impair ARE-containing RNA-binding. Phosphorylated at Ser-54, Ser-92 and Ser-203 by MAPKAPK2; these phosphorylations increase the association with 14-3-3 proteins and mediate ARE-containing mRNA stabilization in a protein kinase AKT1-independent manner. MAPKAPK2-mediated phosphorylations at Ser-54, Ser-92 and Ser-203 do not impair ARE-containing RNA-binding. Phosphorylations increase the association with 14-3-3 proteins and mediate ARE-containing mRNA stabilization during early adipogenesis in a p38 MAPK- and AKT-dependent manner. Post-translationally, ubiquitinated. Ubiquitination leads to proteasomal degradation, a process inhibited by phosphorylations at Ser-90, Ser-92 and Ser-203. In terms of tissue distribution, expressed mainly in the basal epidermal layer, weakly in the suprabasal epidermal layers. Expressed in epidermal keratinocytes (at protein level). Expressed in osteoblasts.

It localises to the nucleus. The protein localises to the cytoplasm. The protein resides in the cytoplasmic granule. Its subcellular location is the P-body. Zinc-finger RNA-binding protein that destabilizes several cytoplasmic AU-rich element (ARE)-containing mRNA transcripts by promoting their poly(A) tail removal or deadenylation, and hence provide a mechanism for attenuating protein synthesis. Acts as a 3'-untranslated region (UTR) ARE mRNA-binding adapter protein to communicate signaling events to the mRNA decay machinery. Functions by recruiting the CCR4-NOT deadenylase complex and components of the cytoplasmic RNA decay machinery to the bound ARE-containing mRNAs, and hence promotes ARE-mediated mRNA deadenylation and decay processes. Also induces the degradation of ARE-containing mRNAs even in absence of poly(A) tail. Binds to 3'-UTR ARE of numerous mRNAs. Positively regulates early adipogenesis by promoting ARE-mediated mRNA decay of immediate early genes (IEGs). Promotes ARE-mediated mRNA decay of mineralocorticoid receptor NR3C2 mRNA in response to hypertonic stress. Negatively regulates hematopoietic/erythroid cell differentiation by promoting ARE-mediated mRNA decay of the transcription factor STAT5B mRNA. Positively regulates monocyte/macrophage cell differentiation by promoting ARE-mediated mRNA decay of the cyclin-dependent kinase CDK6 mRNA. Promotes degradation of ARE-containing pluripotency-associated mRNAs in embryonic stem cells (ESCs), such as NANOG, through a fibroblast growth factor (FGF)-induced MAPK-dependent signaling pathway, and hence attenuates ESC self-renewal and positively regulates mesendoderm differentiation. May play a role in mediating pro-apoptotic effects in malignant B-cells by promoting ARE-mediated mRNA decay of BCL2 mRNA. In association with ZFP36L2 maintains quiescence on developing B lymphocytes by promoting ARE-mediated decay of several mRNAs encoding cell cycle regulators that help B cells progress through the cell cycle, and hence ensuring accurate variable-diversity-joining (VDJ) recombination and functional immune cell formation. Together with ZFP36L2 is also necessary for thymocyte development and prevention of T-cell acute lymphoblastic leukemia (T-ALL) transformation by promoting ARE-mediated mRNA decay of the oncogenic transcription factor NOTCH1 mRNA. Participates in the delivery of target ARE-mRNAs to processing bodies (PBs). In addition to its cytosolic mRNA-decay function, plays a role in the regulation of nuclear mRNA 3'-end processing; modulates mRNA 3'-end maturation efficiency of the DLL4 mRNA through binding with an ARE embedded in a weak noncanonical polyadenylation (poly(A)) signal in endothelial cells. Also involved in the regulation of stress granule (SG) and P-body (PB) formation and fusion. Plays a role in vasculogenesis and endocardial development. Plays a role in the regulation of keratinocyte proliferation, differentiation and apoptosis. Plays a role in myoblast cell differentiation. This is mRNA decay activator protein ZFP36L1 from Homo sapiens (Human).